The primary structure comprises 419 residues: UDP-N-acetylglucosamine 1-carboxyvinyltransferase (419 aa).

22-23 lines the phosphoenolpyruvate pocket; that stretch reads KN. R95 is a UDP-N-acetyl-alpha-D-glucosamine binding site. Residue C119 is the Proton donor of the active site. C119 carries the 2-(S-cysteinyl)pyruvic acid O-phosphothioketal modification. UDP-N-acetyl-alpha-D-glucosamine contacts are provided by D308 and I330.

The protein belongs to the EPSP synthase family. MurA subfamily.

It is found in the cytoplasm. It carries out the reaction phosphoenolpyruvate + UDP-N-acetyl-alpha-D-glucosamine = UDP-N-acetyl-3-O-(1-carboxyvinyl)-alpha-D-glucosamine + phosphate. It functions in the pathway cell wall biogenesis; peptidoglycan biosynthesis. In terms of biological role, cell wall formation. Adds enolpyruvyl to UDP-N-acetylglucosamine. This Rickettsia bellii (strain OSU 85-389) protein is UDP-N-acetylglucosamine 1-carboxyvinyltransferase.